The primary structure comprises 419 residues: Protein FAM217A (419 aa).

4 disordered regions span residues Met1–Leu23, Asp100–Ser119, Pro234–Leu298, and Pro362–Ser388. Residues Glu7 to Leu23 show a composition bias toward polar residues. Polar residues predominate over residues Ser284–Leu298. Over residues Pro378–Ser388 the composition is skewed to basic residues.

Belongs to the FAM217 family.

This Rattus norvegicus (Rat) protein is Protein FAM217A (Fam217a).